The sequence spans 339 residues: DNA-directed RNA polymerase subunit alpha (339 aa).

The segment at 1 to 233 is alpha N-terminal domain (alpha-NTD); the sequence is MVREEVAGST…DLFLPFLHAE (233 aa). Residues 264-339 form an alpha C-terminal domain (alpha-CTD) region; it reads KKGIPLNCIF…IDLLKNKLSF (76 aa).

The protein belongs to the RNA polymerase alpha chain family. As to quaternary structure, in plastids the minimal PEP RNA polymerase catalytic core is composed of four subunits: alpha, beta, beta', and beta''. When a (nuclear-encoded) sigma factor is associated with the core the holoenzyme is formed, which can initiate transcription.

The protein resides in the plastid. It is found in the chloroplast. It carries out the reaction RNA(n) + a ribonucleoside 5'-triphosphate = RNA(n+1) + diphosphate. Its function is as follows. DNA-dependent RNA polymerase catalyzes the transcription of DNA into RNA using the four ribonucleoside triphosphates as substrates. The chain is DNA-directed RNA polymerase subunit alpha from Psathyrostachys stoloniformis.